The chain runs to 160 residues: Succinate dehydrogenase assembly factor 2-B, mitochondrial (160 aa).

A mitochondrion-targeting transit peptide spans 1–23 (MLRQLKLTLNISRWIFMPWQRHA).

The protein belongs to the SDHAF2 family. As to quaternary structure, interacts with the flavoprotein subunit within the SDH catalytic dimer.

The protein resides in the mitochondrion matrix. Functionally, plays an essential role in the assembly of succinate dehydrogenase (SDH), an enzyme complex (also referred to as respiratory complex II) that is a component of both the tricarboxylic acid (TCA) cycle and the mitochondrial electron transport chain, and which couples the oxidation of succinate to fumarate with the reduction of ubiquinone (coenzyme Q) to ubiquinol. Required for flavinylation (covalent attachment of FAD) of the flavoprotein subunit of the SDH catalytic dimer. This is Succinate dehydrogenase assembly factor 2-B, mitochondrial from Drosophila pseudoobscura pseudoobscura (Fruit fly).